Reading from the N-terminus, the 347-residue chain is Protein YIPF3 (347 aa).

The segment at 1–31 (MATPAAPASGVRNGAGPEWGGFEENIQGGGS) is disordered. Position 2 is an N-acetylalanine; in Protein YIPF3, N-terminally processed (Ala-2). Residues 2–145 (ATPAAPASGV…PIKMVNFPQK (144 aa)) are Cytoplasmic-facing. Residues 146–166 (VAGELYGPLMLVFTLVAILLH) form a helical membrane-spanning segment. Residues 167-184 (GMKTSDTIIREGTLMGTA) are Lumenal-facing. The chain crosses the membrane as a helical span at residues 185–205 (IGTCFGYWLGVSSFIYFLAYL). The Cytoplasmic segment spans residues 206-211 (CNAQIT). A helical transmembrane segment spans residues 212–234 (MLQMLALLGYGLFGHCIVLFITY). At 235–237 (NIH) the chain is on the lumenal side. Residues 238 to 260 (LHALFYLFWLLVGGLSTLRMVAV) form a helical membrane-spanning segment. The Cytoplasmic segment spans residues 261-271 (LVSRTVGPTQR). Residues 272–292 (LLLCGTLAALHMLFLLYLHFA) traverse the membrane as a helical segment. Topologically, residues 293–347 (YHKVVEGILDTLEGPNIPPMQRVPRDIPAVLPAARLPVAVINATAKAIAVTLQSH) are lumenal. An N-linked (GlcNAc...) asparagine glycan is attached at Asn-334.

The protein belongs to the YIP1 family. In terms of assembly, interacts with YIPF4 and YIPF5. In terms of tissue distribution, expressed by splenocytes (at protein level).

The protein localises to the cell membrane. The protein resides in the golgi apparatus. Its subcellular location is the cis-Golgi network membrane. It localises to the cytoplasm. Functionally, involved in the maintenance of the Golgi structure. May play a role in hematopoiesis. The polypeptide is Protein YIPF3 (Yipf3) (Mus musculus (Mouse)).